The following is a 560-amino-acid chain: Probable sulfate transporter Rv1739c (560 aa).

The tract at residues 1–436 is required for sulfate transport in E.coli; sequence MIPTMTSAGW…VLGFVPGIAG (436 aa). A run of 11 helical transmembrane segments spans residues 29–49, 51–71, 79–99, 105–125, 138–158, 184–204, 207–227, 256–276, 333–353, 355–375, and 394–414; these read VLAG…YATV, GLPP…YALL, IGPE…MAAG, AVLA…AGTA, VLVG…LGTI, WPTF…TRWA, APGP…MSLD, ALII…VLTA, LIAL…LAMF, IAAL…LSEF, and AAVL…LSIL. The 116-residue stretch at 442 to 557 folds into the STAS domain; sequence DYPQAKRVPG…MTLPTAVQAF (116 aa).

The protein belongs to the SLC26A/SulP transporter (TC 2.A.53) family.

The protein localises to the cell membrane. Functionally, expression in E.coli induces sulfate uptake during early- to mid-log phase growth. Uptake is maximal at pH 6.0, is sulfate-specific, requires E.coli CysA and the transmembrane segment but not the STAS domain of the protein. The sequence is that of Probable sulfate transporter Rv1739c from Mycobacterium tuberculosis (strain ATCC 25618 / H37Rv).